The chain runs to 409 residues: Putative competence-damage inducible protein (409 aa).

Belongs to the CinA family.

In Clostridium botulinum (strain Langeland / NCTC 10281 / Type F), this protein is Putative competence-damage inducible protein.